Here is a 355-residue protein sequence, read N- to C-terminus: Chorismate synthase (355 aa).

The NADP(+) site is built by Arg44 and Arg49. FMN contacts are provided by residues His121–Ser123, Gly277, Lys292–Ser296, and Arg319.

Belongs to the chorismate synthase family. FMNH2 serves as cofactor.

The enzyme catalyses 5-O-(1-carboxyvinyl)-3-phosphoshikimate = chorismate + phosphate. It participates in metabolic intermediate biosynthesis; chorismate biosynthesis; chorismate from D-erythrose 4-phosphate and phosphoenolpyruvate: step 7/7. Its function is as follows. Catalyzes the anti-1,4-elimination of the C-3 phosphate and the C-6 proR hydrogen from 5-enolpyruvylshikimate-3-phosphate (EPSP) to yield chorismate, which is the branch point compound that serves as the starting substrate for the three terminal pathways of aromatic amino acid biosynthesis. This reaction introduces a second double bond into the aromatic ring system. The protein is Chorismate synthase of Thermococcus kodakarensis (strain ATCC BAA-918 / JCM 12380 / KOD1) (Pyrococcus kodakaraensis (strain KOD1)).